Consider the following 385-residue polypeptide: MKLVHKDIEKDNAGQVTLIPDEAEDMWHTYNLLQVGDSLRASTIRKVQTESSTGSVGSSRVRTTLTLCVETIDFDSQACQLRVKGTNIQENQYVKMGAYHTIELELNRKFTLAKKVWDSVVLDRIEQACDPAQKADVAAVVMQEGLANLVLVTPAMTLLRAKVEVTIPRKRKGSCTQHDKALERFYEAVMQGILRHFNFDVVKCILVASPGFVKDQFISYLFKEAVRQDCKLLLENRSKFMVVHSSSGHKYSLKEVLCDPAVTARLSDTKAAGEVKALEDFYKMLQQEPDRAFYGLAHVERASEALAIDILLISDTLFRHQDVATRGRYVRLVDNVKENGGTVRIFSSLHVSGEQLNQLSGVAAILRFPIADVSEPEENSSSDED.

This sequence belongs to the eukaryotic release factor 1 family. Pelota subfamily. Component of the Pelota-HBS1L complex, also named Dom34-Hbs1 complex, composed of PELO and HBS1L. A divalent metal cation is required as a cofactor.

The protein resides in the cytoplasm. Functionally, component of the Pelota-HBS1L complex, a complex that recognizes stalled ribosomes and triggers the No-Go Decay (NGD) pathway. In the Pelota-HBS1L complex, PELO recognizes ribosomes stalled at the 3' end of an mRNA and engages stalled ribosomes by destabilizing mRNA in the mRNA channel. Following mRNA extraction from stalled ribosomes by the SKI complex, the Pelota-HBS1L complex promotes recruitment of ABCE1, which drives the disassembly of stalled ribosomes, followed by degradation of damaged mRNAs as part of the NGD pathway. This Danio rerio (Zebrafish) protein is Protein pelota homolog (pelo).